The chain runs to 370 residues: G-protein coupled receptor homolog K2 (370 aa).

The Extracellular segment spans residues 1 to 61; the sequence is MTSPTNSTML…CTFLEDTKYH (61 aa). N-linked (GlcNAc...) asparagine; by host glycans are attached at residues Asn-6 and Asn-51. A helical transmembrane segment spans residues 62 to 82; sequence IIVIHIILFLLGSIGNIFVVS. Residues 83-94 lie on the Cytoplasmic side of the membrane; that stretch reads LIAFKRNKSITD. A helical membrane pass occupies residues 95–115; sequence IYILNLSMSDCIFVFQIPFIV. The Extracellular segment spans residues 116–131; sequence YSKLDQWIFGNILCKI. A helical transmembrane segment spans residues 132 to 152; the sequence is MSVLYYVGFFSNMFIITLMSI. The Cytoplasmic portion of the chain corresponds to 153 to 171; sequence DRYFAIVHPIKRQPYRTKR. A helical membrane pass occupies residues 172-192; it reads IGILMCCSAWLLSLILSSPVS. At 193–223 the chain is on the extracellular side; sequence KLYENIPHMSKDIYQCTLTNENDSIIAFIKR. Residues 224–244 form a helical membrane-spanning segment; it reads LMQIEITILGFLIPIIIFVYC. Over 245–265 the chain is Cytoplasmic; the sequence is YYRIFTTVVRLRNRRKYKSIK. A helical transmembrane segment spans residues 266-286; it reads IVLMIVVCSLICWIPLYIVLM. The Extracellular portion of the chain corresponds to 287-300; it reads IATIVSLYTSNIFR. A helical membrane pass occupies residues 301–321; it reads HLCLYLNLAYAITFSETISLA. The Cytoplasmic portion of the chain corresponds to 322-370; the sequence is RCCINPIIYTLIGEHVRSRISSICSCIYRDNRIRKKLFSRKSSSSSNII.

The protein belongs to the G-protein coupled receptor 1 family.

Its subcellular location is the host cell membrane. Its function is as follows. Putative chemokine receptor. The polypeptide is G-protein coupled receptor homolog K2 (Sus scrofa (Pig)).